Reading from the N-terminus, the 102-residue chain is CRISPR-associated endoribonuclease Cas2 1 (102 aa).

Residue aspartate 17 participates in Mg(2+) binding.

It belongs to the CRISPR-associated endoribonuclease Cas2 protein family. Homodimer, forms a heterotetramer with a Cas1 homodimer. Requires Mg(2+) as cofactor.

Functionally, CRISPR (clustered regularly interspaced short palindromic repeat), is an adaptive immune system that provides protection against mobile genetic elements (viruses, transposable elements and conjugative plasmids). CRISPR clusters contain sequences complementary to antecedent mobile elements and target invading nucleic acids. CRISPR clusters are transcribed and processed into CRISPR RNA (crRNA). Functions as a ssRNA-specific endoribonuclease. Involved in the integration of spacer DNA into the CRISPR cassette. The polypeptide is CRISPR-associated endoribonuclease Cas2 1 (Rhodospirillum rubrum (strain ATCC 11170 / ATH 1.1.1 / DSM 467 / LMG 4362 / NCIMB 8255 / S1)).